Here is a 127-residue protein sequence, read N- to C-terminus: Probable 4-amino-4-deoxy-L-arabinose-phosphoundecaprenol flippase subunit ArnF (127 aa).

The Cytoplasmic portion of the chain corresponds to 1-2; that stretch reads MG. Residues 3–23 traverse the membrane as a helical segment; that stretch reads LLFALGSVVLVSAAQLLLKWA. The Periplasmic portion of the chain corresponds to 24–47; that stretch reads MIQLPDISQLPQFLSSLSQFPLPT. The chain crosses the membrane as a helical span at residues 48–68; it reads AALFLGLLAYALSMLCWLLAL. At 69 to 76 the chain is on the cytoplasmic side; the sequence is KRLPLSRA. A helical transmembrane segment spans residues 77–97; sequence YPLLSLSYLLVWLAALWLPGL. Residues 98–102 are Periplasmic-facing; the sequence is NEVFR. A helical membrane pass occupies residues 103–123; the sequence is WGKLAGAGLIVSGLLLICWPA. Over 124 to 127 the chain is Cytoplasmic; sequence AKTR.

Belongs to the ArnF family. Heterodimer of ArnE and ArnF.

The protein localises to the cell inner membrane. It participates in bacterial outer membrane biogenesis; lipopolysaccharide biosynthesis. In terms of biological role, translocates 4-amino-4-deoxy-L-arabinose-phosphoundecaprenol (alpha-L-Ara4N-phosphoundecaprenol) from the cytoplasmic to the periplasmic side of the inner membrane. The protein is Probable 4-amino-4-deoxy-L-arabinose-phosphoundecaprenol flippase subunit ArnF of Erwinia tasmaniensis (strain DSM 17950 / CFBP 7177 / CIP 109463 / NCPPB 4357 / Et1/99).